The chain runs to 356 residues: Uroporphyrinogen decarboxylase (356 aa).

Substrate is bound by residues 25-29 (RQAGR), Asp-75, Tyr-152, Thr-207, and His-326.

The protein belongs to the uroporphyrinogen decarboxylase family. Homodimer.

Its subcellular location is the cytoplasm. It catalyses the reaction uroporphyrinogen III + 4 H(+) = coproporphyrinogen III + 4 CO2. The protein operates within porphyrin-containing compound metabolism; protoporphyrin-IX biosynthesis; coproporphyrinogen-III from 5-aminolevulinate: step 4/4. In terms of biological role, catalyzes the decarboxylation of four acetate groups of uroporphyrinogen-III to yield coproporphyrinogen-III. The protein is Uroporphyrinogen decarboxylase of Magnetococcus marinus (strain ATCC BAA-1437 / JCM 17883 / MC-1).